A 298-amino-acid polypeptide reads, in one-letter code: MLIDPIELYRYPEKWIKDRDAEKKVRSGLYILTEDGYLRRGITTGTTASAAAVAAIASLKEKVEKVKVSTPAGVDVEVEVEAEKGFARVRKFSGDHEFDVTNGIIFEAEVCETSGIFFGRGVGVKAGEKAVSRSAKLQILENFIKASREFNFSGGVRISVPDGEEVAKKTGNEKVGIKGGISILGTTGFVEPWCKKLVETKLKIAMQYHRIAITTGRKAWLYARKKFPEYQPFVFGVHIDEALKHPGEKIIVGFPGLLKIWAGSRDRIEERAREEGVRVVVIEDDMDSWVWDVQGTDH.

Belongs to the CbiD family.

The catalysed reaction is Co-precorrin-5B + S-adenosyl-L-methionine = Co-precorrin-6A + S-adenosyl-L-homocysteine. It participates in cofactor biosynthesis; adenosylcobalamin biosynthesis; cob(II)yrinate a,c-diamide from sirohydrochlorin (anaerobic route): step 6/10. Its function is as follows. Catalyzes the methylation of C-1 in cobalt-precorrin-5B to form cobalt-precorrin-6A. The chain is Cobalt-precorrin-5B C(1)-methyltransferase from Archaeoglobus fulgidus (strain ATCC 49558 / DSM 4304 / JCM 9628 / NBRC 100126 / VC-16).